Consider the following 284-residue polypeptide: L-ribulose-5-phosphate 3-epimerase UlaE (284 aa).

It belongs to the L-ribulose-5-phosphate 3-epimerase family.

The catalysed reaction is L-ribulose 5-phosphate = L-xylulose 5-phosphate. It participates in cofactor degradation; L-ascorbate degradation; D-xylulose 5-phosphate from L-ascorbate: step 3/4. In terms of biological role, catalyzes the isomerization of L-xylulose-5-phosphate to L-ribulose-5-phosphate. Is involved in the anaerobic L-ascorbate utilization. This is L-ribulose-5-phosphate 3-epimerase UlaE from Salmonella typhimurium (strain LT2 / SGSC1412 / ATCC 700720).